Reading from the N-terminus, the 505-residue chain is MSEQHAQGADAVVDLNNELKTRREKLANLREQGIAFPNDFRRDHTSDQLHAEFDGKENEELEALNIEVAVAGRMMTRRIMGKASFVTLQDVGGRIQLYVARDDLPEGVYNEQFKKWDLGDILGAKGKLFKTKTGELSIHCTELRLLTKALRPLPDKFHGLQDQEARYRQRYLDLISNDESRNTFKVRSQILSGIRQFMVNRGFMEVETPMMQVIPGGAAARPFITHHNALDLDMYLRIAPELYLKRLVVGGFERVFEINRNFRNEGISVRHNPEFTMMELYMAYADYKDLIELTESLFRTLAQDILGKTEVTYGDVTLDFGKPFEKLTMREAIKKYRPETDMADLDNFDSAKAIVESIGIHVEKSWGLGRIVTEIFEEVAEAHLIQPTFITEYPAEVSPLARRNDVNPEITDRFEFFIGGREIGNGFSELNDAEDQAQRFLDQVAAKDAGDDEAMFYDEDYVTALEHGLPPTAGLGIGIDRMVMLFTNSHTIRDVILFPAMRPVK.

Mg(2+)-binding residues include Glu415 and Glu422.

The protein belongs to the class-II aminoacyl-tRNA synthetase family. In terms of assembly, homodimer. It depends on Mg(2+) as a cofactor.

It is found in the cytoplasm. It catalyses the reaction tRNA(Lys) + L-lysine + ATP = L-lysyl-tRNA(Lys) + AMP + diphosphate. In Escherichia coli O157:H7, this protein is Lysine--tRNA ligase.